The sequence spans 260 residues: Malonyl-[acyl-carrier protein] O-methyltransferase (260 aa).

It belongs to the methyltransferase superfamily.

It carries out the reaction malonyl-[ACP] + S-adenosyl-L-methionine = malonyl-[ACP] methyl ester + S-adenosyl-L-homocysteine. The protein operates within cofactor biosynthesis; biotin biosynthesis. Converts the free carboxyl group of a malonyl-thioester to its methyl ester by transfer of a methyl group from S-adenosyl-L-methionine (SAM). It allows to synthesize pimeloyl-ACP via the fatty acid synthetic pathway. The polypeptide is Malonyl-[acyl-carrier protein] O-methyltransferase (Haemophilus influenzae (strain ATCC 51907 / DSM 11121 / KW20 / Rd)).